Consider the following 126-residue polypeptide: Type II methyltransferase M.HgiGI (126 aa).

The SAM-dependent MTase C5-type domain occupies 1–126; the sequence is MKTIDLFAGC…ARLSKIHQQA (126 aa). The active site involves Cys-75.

It belongs to the class I-like SAM-binding methyltransferase superfamily. C5-methyltransferase family.

It carries out the reaction a 2'-deoxycytidine in DNA + S-adenosyl-L-methionine = a 5-methyl-2'-deoxycytidine in DNA + S-adenosyl-L-homocysteine + H(+). Functionally, a methylase, recognizes the double-stranded sequence 5'-GRCGYC-3', methylates C-? on both strands, and protects the DNA from cleavage by the HgiEI endonuclease. In Herpetosiphon aurantiacus (Herpetosiphon giganteus), this protein is Type II methyltransferase M.HgiGI.